Here is a 164-residue protein sequence, read N- to C-terminus: CB1 cannabinoid receptor-interacting protein 1 (164 aa).

It belongs to the CNRIP family. Interacts with the cannabinoid receptor CNR1 (via C-terminus). Does not interact with cannabinoid receptor CNR2.

Suppresses cannabinoid receptor CNR1-mediated tonic inhibition of voltage-gated calcium channels. Functionally, does not suppress cannabinoid receptor CNR1-mediated tonic inhibition of voltage-gated calcium channels. The chain is CB1 cannabinoid receptor-interacting protein 1 (CNRIP1) from Homo sapiens (Human).